The sequence spans 68 residues: Cytochrome c3 (68 aa).

Heme contacts are provided by histidine 17, histidine 20, cysteine 26, cysteine 29, histidine 30, histidine 45, cysteine 49, cysteine 52, histidine 53, cysteine 62, cysteine 65, and histidine 66.

Binds 3 heme groups per subunit.

Participates in sulfate respiration coupled with phosphorylation by transferring electrons from the enzyme dehydrogenase to ferredoxin. This Desulfuromonas acetoxidans (Chloropseudomonas ethylica) protein is Cytochrome c3 (cyd).